The primary structure comprises 787 residues: uncharacterized protein (787 aa).

Position 1 is an N-acetylmethionine (M1). Disordered stretches follow at residues 1–115 (MFDG…NDHK), 130–200 (TNPF…QRSE), and 217–238 (VSSGSSLSLDTSENSDTKASQD). Residues 36-54 (VPSTIKKSTNIARTSTAET) show a composition bias toward polar residues. Residue S63 is modified to Phosphoserine. Positions 130–142 (TNPFTTSANSNAH) are enriched in polar residues. Low complexity predominate over residues 160 to 169 (SITTSISNNT). A compositionally biased stretch (basic and acidic residues) spans 170 to 184 (TKEEIESNNDSERDS). Low complexity predominate over residues 218–230 (SSGSSLSLDTSEN). A phosphoserine mark is found at S254, S313, S342, S345, S390, S477, S492, S546, S683, and S699.

Its subcellular location is the cytoplasm. This is an uncharacterized protein from Saccharomyces cerevisiae (strain ATCC 204508 / S288c) (Baker's yeast).